The primary structure comprises 166 residues: Zinc finger CCHC domain-containing protein 13 (166 aa).

The segment at 4 to 21 (KDFFACGHSGHWARGCPR) adopts a CCHC-type 1; degenerate zinc-finger fold. The CCHC-type 2; degenerate zinc finger occupies 45–62 (YTCYCCGESGRNAKNCVL). 4 CCHC-type zinc fingers span residues 65 to 82 (NICYNCGRSGHIAKDCKD), 89 to 106 (QHCYTCGRLGHLARDCDR), 110 to 127 (QKCYSCGKLGHIQKDCAQ), and 128 to 145 (VKCYRCGEIGHVAINCSK).

The chain is Zinc finger CCHC domain-containing protein 13 (ZCCHC13) from Homo sapiens (Human).